The chain runs to 122 residues: Large ribosomal subunit protein uL14 (122 aa).

The protein belongs to the universal ribosomal protein uL14 family. As to quaternary structure, part of the 50S ribosomal subunit. Forms a cluster with proteins L3 and L19. In the 70S ribosome, L14 and L19 interact and together make contacts with the 16S rRNA in bridges B5 and B8.

Its function is as follows. Binds to 23S rRNA. Forms part of two intersubunit bridges in the 70S ribosome. The protein is Large ribosomal subunit protein uL14 of Granulibacter bethesdensis (strain ATCC BAA-1260 / CGDNIH1).